The sequence spans 137 residues: Small heat shock protein IbpA (137 aa).

The sHSP domain occupies 28 to 137; it reads SQSNGGYPPY…ANKPRRIEIN (110 aa).

It belongs to the small heat shock protein (HSP20) family. As to quaternary structure, monomer. Forms homomultimers of about 100-150 subunits at optimal growth temperatures. Conformation changes to monomers at high temperatures or high ionic concentrations.

The protein localises to the cytoplasm. Associates with aggregated proteins, together with IbpB, to stabilize and protect them from irreversible denaturation and extensive proteolysis during heat shock and oxidative stress. Aggregated proteins bound to the IbpAB complex are more efficiently refolded and reactivated by the ATP-dependent chaperone systems ClpB and DnaK/DnaJ/GrpE. Its activity is ATP-independent. This Salmonella choleraesuis (strain SC-B67) protein is Small heat shock protein IbpA.